We begin with the raw amino-acid sequence, 262 residues long: Mlc titration factor A (262 aa).

Zn(2+) contacts are provided by histidine 111, histidine 148, histidine 152, and glutamate 211.

Belongs to the MtfA family. In terms of assembly, interacts with Mlc. Requires Zn(2+) as cofactor.

It localises to the cytoplasm. Involved in the modulation of the activity of the glucose-phosphotransferase system (glucose-PTS). Interacts with the transcriptional repressor Mlc, preventing its interaction with DNA and leading to the modulation of expression of genes regulated by Mlc, including ptsG, which encodes the PTS system glucose-specific EIICB component. In terms of biological role, shows zinc-dependent metallopeptidase activity. The chain is Mlc titration factor A from Serratia proteamaculans (strain 568).